Consider the following 447-residue polypeptide: Methyl-coenzyme M reductase II subunit beta (447 aa).

Residue Tyr-368 coordinates coenzyme M. Position 370 (Gly-370) interacts with coenzyme B.

Belongs to the methyl-coenzyme M reductase beta subunit family. In terms of assembly, MCR is a hexamer of two alpha, two beta, and two gamma chains, forming a dimer of heterotrimers. The cofactor is coenzyme F430.

The enzyme catalyses coenzyme B + methyl-coenzyme M = methane + coenzyme M-coenzyme B heterodisulfide. It participates in one-carbon metabolism; methyl-coenzyme M reduction; methane from methyl-coenzyme M: step 1/1. Component of the methyl-coenzyme M reductase (MCR) I that catalyzes the reductive cleavage of methyl-coenzyme M (CoM-S-CH3 or 2-(methylthio)ethanesulfonate) using coenzyme B (CoB or 7-mercaptoheptanoylthreonine phosphate) as reductant which results in the production of methane and the mixed heterodisulfide of CoB and CoM (CoM-S-S-CoB). This is the final step in methanogenesis. The protein is Methyl-coenzyme M reductase II subunit beta (mrtB) of Methanocaldococcus jannaschii (strain ATCC 43067 / DSM 2661 / JAL-1 / JCM 10045 / NBRC 100440) (Methanococcus jannaschii).